A 708-amino-acid chain; its full sequence is tRNA 5-methylaminomethyl-2-thiouridine biosynthesis bifunctional protein MnmC (708 aa).

The tRNA (mnm(5)s(2)U34)-methyltransferase stretch occupies residues 1 to 278 (MTAEPNKPCQ…ERQVLRQQDA (278 aa)). The tract at residues 301 to 708 (IGGGLASAHL…LRKLLKGKAL (408 aa)) is FAD-dependent cmnm(5)s(2)U34 oxidoreductase.

The protein in the N-terminal section; belongs to the methyltransferase superfamily. tRNA (mnm(5)s(2)U34)-methyltransferase family. It in the C-terminal section; belongs to the DAO family. It depends on FAD as a cofactor.

It localises to the cytoplasm. The enzyme catalyses 5-aminomethyl-2-thiouridine(34) in tRNA + S-adenosyl-L-methionine = 5-methylaminomethyl-2-thiouridine(34) in tRNA + S-adenosyl-L-homocysteine + H(+). In terms of biological role, catalyzes the last two steps in the biosynthesis of 5-methylaminomethyl-2-thiouridine (mnm(5)s(2)U) at the wobble position (U34) in tRNA. Catalyzes the FAD-dependent demodification of cmnm(5)s(2)U34 to nm(5)s(2)U34, followed by the transfer of a methyl group from S-adenosyl-L-methionine to nm(5)s(2)U34, to form mnm(5)s(2)U34. The chain is tRNA 5-methylaminomethyl-2-thiouridine biosynthesis bifunctional protein MnmC from Shewanella baltica (strain OS195).